Reading from the N-terminus, the 250-residue chain is Histone H1.3 (250 aa).

2 disordered regions span residues 17–53 (AASG…QMVD) and 104–250 (QTKG…ATKK). Residues 27 to 42 (KKAAATPKSKKSTAAP) show a composition bias toward low complexity. The H15 domain occupies 44-118 (SHPPTQQMVD…GASGSFKLSR (75 aa)). The span at 120–133 (AKKDAKPKASAVEK) shows a compositional bias: basic and acidic residues. Low complexity predominate over residues 138–161 (VNASAAAATKRSSSTSTTKKAAGA). A compositionally biased stretch (basic and acidic residues) spans 174–191 (KNVEKKKADKEKAKDAKK). The segment covering 192 to 234 (TGTIKAKLTTAKAKSSATKPKTPKPKTTSAKPKKVVSATTPKK) has biased composition (low complexity). Residues 235 to 250 (TAVKKPKAKTASATKK) are compositionally biased toward basic residues.

Belongs to the histone H1/H5 family.

It is found in the nucleus. The protein localises to the chromosome. Histones H1 are necessary for the condensation of nucleosome chains into higher-order structures. In Drosophila virilis (Fruit fly), this protein is Histone H1.3 (His1.3).